Here is a 165-residue protein sequence, read N- to C-terminus: Transcriptional repressor NrdR (165 aa).

A zinc finger lies at cysteine 3–cysteine 34. The ATP-cone domain occupies valine 49–aspartate 139.

It belongs to the NrdR family. Zn(2+) is required as a cofactor.

Its function is as follows. Negatively regulates transcription of bacterial ribonucleotide reductase nrd genes and operons by binding to NrdR-boxes. In Desulforapulum autotrophicum (strain ATCC 43914 / DSM 3382 / VKM B-1955 / HRM2) (Desulfobacterium autotrophicum), this protein is Transcriptional repressor NrdR.